We begin with the raw amino-acid sequence, 382 residues long: Sphingoid long-chain base transporter RSB1 (382 aa).

Topologically, residues 1-34 (MSNATNNTLGSLLPQLEAAANSNSLYGGMVPNLR) are extracellular. 2 N-linked (GlcNAc...) asparagine glycosylation sites follow: asparagine 3 and asparagine 6. Residues 35–55 (FNITMIVIWGILLTIHVVQLL) form a helical membrane-spanning segment. At 56–57 (MR) the chain is on the cytoplasmic side. Residues 58 to 78 (QYWFSIAFICTGILEVLGFIG) form a helical membrane-spanning segment. Residues 79-90 (RTWSHSNVADMD) are Extracellular-facing. Residues 91-111 (AFLLNMICLTIAPVFTMGGIY) form a helical membrane-spanning segment. The Cytoplasmic portion of the chain corresponds to 112 to 135 (YQLAKLIEVYGHRFSLLPSPMAYS). Residues 136–156 (FIFICSDIVSLVVQAVGGGLC) traverse the membrane as a helical segment. The Extracellular portion of the chain corresponds to 157-171 (GVAVTDGTSTTTGNH). A helical membrane pass occupies residues 172-192 (VFIAGLAIQVASMAIFLMLWF). Over 193 to 241 (HFLFRIYISVRWEHINSRPISLSLLKISQTEVDYLYREKFHFLRLEPKR) the chain is Cytoplasmic. A helical membrane pass occupies residues 242-262 (WVFHYFNLAMTVAVLTIFTRC). Over 263-281 (CYRLAELVVGWDGYLITHE) the chain is Extracellular. Residues 282–302 (WYFIILDALMMAIATVTLTIF) form a helical membrane-spanning segment. The Cytoplasmic segment spans residues 303–382 (HPGFAFKGRS…LFSSKKKAKL (80 aa)).

Belongs to the lipid-translocating exporter (LTE) (TC 9.A.26.1) family.

It is found in the cell membrane. Functionally, catalyzes the ATP-dependent translocation of sphingoid long-chain bases (LCBs) from the cytoplasmic site toward the extracytoplasmic side of the membrane (flip-flop). Involved in the establishment of the functional lipid asymmetry of the plasma membrane. Regulates intracellular levels of LCBs, sphingolipid precursors that are growth inhibitory at increased levels. This Saccharomyces cerevisiae (strain RM11-1a) (Baker's yeast) protein is Sphingoid long-chain base transporter RSB1 (RSB1).